Here is a 261-residue protein sequence, read N- to C-terminus: Hemin import ATP-binding protein HmuV (261 aa).

The ABC transporter domain maps to 2–243; the sequence is LCANNVSAQI…ALLKRVYNIN (242 aa). 34–41 serves as a coordination point for ATP; sequence GPNGAGKS.

Belongs to the ABC transporter superfamily. Heme (hemin) importer (TC 3.A.1.14.5) family. In terms of assembly, the complex is composed of two ATP-binding proteins (HmuV), two transmembrane proteins (HmuU) and a solute-binding protein (HmuT).

It localises to the cell inner membrane. Part of the ABC transporter complex HmuTUV involved in hemin import. Responsible for energy coupling to the transport system. This Pseudoalteromonas translucida (strain TAC 125) protein is Hemin import ATP-binding protein HmuV.